A 332-amino-acid chain; its full sequence is Inositol 2-dehydrogenase 2 (332 aa).

Belongs to the Gfo/Idh/MocA family. As to quaternary structure, homotetramer.

It catalyses the reaction myo-inositol + NAD(+) = scyllo-inosose + NADH + H(+). Its function is as follows. Involved in the oxidation of myo-inositol (MI) to 2-keto-myo-inositol (2KMI or 2-inosose). This is Inositol 2-dehydrogenase 2 from Paenarthrobacter aurescens (strain TC1).